We begin with the raw amino-acid sequence, 205 residues long: Outer-membrane lipoprotein LolB (205 aa).

The first 17 residues, 1–17, serve as a signal peptide directing secretion; that stretch reads MFLRHCITFTMIALLAG. Cys-18 is lipidated: N-palmitoyl cysteine. The S-diacylglycerol cysteine moiety is linked to residue Cys-18.

This sequence belongs to the LolB family. In terms of assembly, monomer.

It localises to the cell outer membrane. In terms of biological role, plays a critical role in the incorporation of lipoproteins in the outer membrane after they are released by the LolA protein. This chain is Outer-membrane lipoprotein LolB, found in Pseudomonas putida (strain ATCC 700007 / DSM 6899 / JCM 31910 / BCRC 17059 / LMG 24140 / F1).